A 276-amino-acid chain; its full sequence is Dermonecrotic toxin Ls4SicTox-alphaIII1i (276 aa).

Residue His3 is part of the active site. The Mg(2+) site is built by Glu23 and Asp25. The Nucleophile role is filled by His38. A disulfide bond links Cys42 and Cys48. Residue Asp82 participates in Mg(2+) binding.

This sequence belongs to the arthropod phospholipase D family. Class I subfamily. The cofactor is Mg(2+). In terms of tissue distribution, expressed by the venom gland.

It is found in the secreted. The catalysed reaction is an N-(acyl)-sphingosylphosphocholine = an N-(acyl)-sphingosyl-1,3-cyclic phosphate + choline. It catalyses the reaction an N-(acyl)-sphingosylphosphoethanolamine = an N-(acyl)-sphingosyl-1,3-cyclic phosphate + ethanolamine. It carries out the reaction a 1-acyl-sn-glycero-3-phosphocholine = a 1-acyl-sn-glycero-2,3-cyclic phosphate + choline. The enzyme catalyses a 1-acyl-sn-glycero-3-phosphoethanolamine = a 1-acyl-sn-glycero-2,3-cyclic phosphate + ethanolamine. Dermonecrotic toxins cleave the phosphodiester linkage between the phosphate and headgroup of certain phospholipids (sphingolipid and lysolipid substrates), forming an alcohol (often choline) and a cyclic phosphate. This toxin acts on sphingomyelin (SM). It may also act on ceramide phosphoethanolamine (CPE), lysophosphatidylcholine (LPC) and lysophosphatidylethanolamine (LPE), but not on lysophosphatidylserine (LPS), and lysophosphatidylglycerol (LPG). It acts by transphosphatidylation, releasing exclusively cyclic phosphate products as second products. Induces dermonecrosis, hemolysis, increased vascular permeability, edema, inflammatory response, and platelet aggregation. This Loxosceles sp. (strain 4 GJB-2008) (Recluse spider) protein is Dermonecrotic toxin Ls4SicTox-alphaIII1i.